The sequence spans 138 residues: Acidic phospholipase A2 BITP01A (138 aa).

The N-terminal stretch at methionine 1–glycine 16 is a signal peptide. 7 disulfides stabilise this stretch: cysteine 42/cysteine 131, cysteine 44/cysteine 60, cysteine 59/cysteine 111, cysteine 65/cysteine 138, cysteine 66/cysteine 104, cysteine 73/cysteine 97, and cysteine 91/cysteine 102. 3 residues coordinate Ca(2+): tyrosine 43, glycine 45, and glycine 47. Histidine 63 is a catalytic residue. Aspartate 64 lines the Ca(2+) pocket. Aspartate 105 is a catalytic residue.

The cofactor is Ca(2+). Expressed by the venom gland.

Its subcellular location is the secreted. It carries out the reaction a 1,2-diacyl-sn-glycero-3-phosphocholine + H2O = a 1-acyl-sn-glycero-3-phosphocholine + a fatty acid + H(+). Snake venom phospholipase A2 (PLA2) that induces edema in mice, produces neuromuscular blockade in chick biventer cervicis, increases CK release and produces myonecrosis. PLA2 catalyzes the calcium-dependent hydrolysis of the 2-acyl groups in 3-sn-phosphoglycerides. The chain is Acidic phospholipase A2 BITP01A from Bothrops insularis (Golden lancehead).